A 156-amino-acid chain; its full sequence is Small ribosomal subunit protein uS7 (156 aa).

The protein belongs to the universal ribosomal protein uS7 family. Part of the 30S ribosomal subunit. Contacts proteins S9 and S11.

One of the primary rRNA binding proteins, it binds directly to 16S rRNA where it nucleates assembly of the head domain of the 30S subunit. Is located at the subunit interface close to the decoding center, probably blocks exit of the E-site tRNA. In Leuconostoc mesenteroides subsp. mesenteroides (strain ATCC 8293 / DSM 20343 / BCRC 11652 / CCM 1803 / JCM 6124 / NCDO 523 / NBRC 100496 / NCIMB 8023 / NCTC 12954 / NRRL B-1118 / 37Y), this protein is Small ribosomal subunit protein uS7.